A 109-amino-acid chain; its full sequence is Sperm-specific class P protein 10 (109 aa).

The region spanning Ser-2–Ala-109 is the MSP domain.

In terms of tissue distribution, expressed at higher level in testis.

In Caenorhabditis elegans, this protein is Sperm-specific class P protein 10 (ssp-10).